Here is a 335-residue protein sequence, read N- to C-terminus: Tetraacyldisaccharide 4'-kinase (335 aa).

58–65 (VVGGSGKT) contributes to the ATP binding site.

The protein belongs to the LpxK family.

The enzyme catalyses a lipid A disaccharide + ATP = a lipid IVA + ADP + H(+). The protein operates within glycolipid biosynthesis; lipid IV(A) biosynthesis; lipid IV(A) from (3R)-3-hydroxytetradecanoyl-[acyl-carrier-protein] and UDP-N-acetyl-alpha-D-glucosamine: step 6/6. Functionally, transfers the gamma-phosphate of ATP to the 4'-position of a tetraacyldisaccharide 1-phosphate intermediate (termed DS-1-P) to form tetraacyldisaccharide 1,4'-bis-phosphate (lipid IVA). This Hydrogenovibrio crunogenus (strain DSM 25203 / XCL-2) (Thiomicrospira crunogena) protein is Tetraacyldisaccharide 4'-kinase.